Reading from the N-terminus, the 81-residue chain is ATP synthase subunit c (81 aa).

Transmembrane regions (helical) follow at residues 5–25 and 57–77; these read IAAGALIGGGLIMAGGAIGAG and VGLVEAAYFINLAFMALFVFA.

This sequence belongs to the ATPase C chain family. In terms of assembly, F-type ATPases have 2 components, F(1) - the catalytic core - and F(0) - the membrane proton channel. F(1) has five subunits: alpha(3), beta(3), gamma(1), delta(1), epsilon(1). F(0) has three main subunits: a(1), b(2) and c(10-14). The alpha and beta chains form an alternating ring which encloses part of the gamma chain. F(1) is attached to F(0) by a central stalk formed by the gamma and epsilon chains, while a peripheral stalk is formed by the delta and b chains.

Its subcellular location is the cell membrane. F(1)F(0) ATP synthase produces ATP from ADP in the presence of a proton or sodium gradient. F-type ATPases consist of two structural domains, F(1) containing the extramembraneous catalytic core and F(0) containing the membrane proton channel, linked together by a central stalk and a peripheral stalk. During catalysis, ATP synthesis in the catalytic domain of F(1) is coupled via a rotary mechanism of the central stalk subunits to proton translocation. Functionally, key component of the F(0) channel; it plays a direct role in translocation across the membrane. A homomeric c-ring of between 10-14 subunits forms the central stalk rotor element with the F(1) delta and epsilon subunits. The protein is ATP synthase subunit c of Mycobacterium marinum (strain ATCC BAA-535 / M).